The chain runs to 92 residues: TVSCGQVDTALTPCLTYLTKGGTPSTQCCSGVRSLKSMTGTKVPDRQAACNCLKQAAARYQGIKDAAAALSQKCGVQLSVPISRSTDCSKIS.

Intrachain disulfides connect C4-C52, C14-C28, C29-C74, and C50-C88.

The protein belongs to the plant LTP family. In terms of tissue distribution, expressed in seeds and, at very low levels, in pulp of fruit (at protein level).

Plant non-specific lipid-transfer proteins transfer phospholipids as well as galactolipids across membranes. May play a role in wax or cutin deposition in the cell walls of expanding epidermal cells and certain secretory tissues. The chain is Non-specific lipid-transfer protein 2 from Actinidia deliciosa (Kiwi).